The primary structure comprises 240 residues: Probable peptide export permease protein YydJ (240 aa).

6 consecutive transmembrane segments (helical) span residues 13 to 33, 50 to 70, 97 to 117, 126 to 146, 153 to 173, and 210 to 230; these read VIIILGAMFVFLFLLGYFLLV, SYTVATQFGLMLFSFVIAFFI, IAVLFLECFAFITLGLLIISL, ALLLFLFSAVILQYILIIGTI, ILISIGVSIVYWMTSVILVAI, and VLFIILYLVSIIIINAIVLRF.

The complex is composed of 2 ATP-binding proteins (YydI), two transmembrane proteins (YydJ).

The protein resides in the cell membrane. Suggested to be part of an ABC transporter complex YydIJ involved in export of the modified peptide YydF. The protein is Probable peptide export permease protein YydJ (yydJ) of Bacillus subtilis (strain 168).